An 881-amino-acid polypeptide reads, in one-letter code: Probable inorganic carbon transporter subunit DabA (881 aa).

Positions 399, 401, 585, and 600 each coordinate Zn(2+).

It belongs to the inorganic carbon transporter (TC 9.A.2) DabA family. As to quaternary structure, forms a complex with DabB. Zn(2+) is required as a cofactor.

It is found in the cell membrane. In terms of biological role, part of an energy-coupled inorganic carbon pump. This chain is Probable inorganic carbon transporter subunit DabA, found in Geobacillus sp. (strain WCH70).